Here is a 329-residue protein sequence, read N- to C-terminus: DNA-directed RNA polymerase subunit alpha (329 aa).

Residues 1–231 (MQTTLLKPKT…EQLAVFAQLE (231 aa)) form an alpha N-terminal domain (alpha-NTD) region. Positions 249 to 329 (FDPILLRPVD…SWPPAGLDKR (81 aa)) are alpha C-terminal domain (alpha-CTD).

Belongs to the RNA polymerase alpha chain family. In terms of assembly, homodimer. The RNAP catalytic core consists of 2 alpha, 1 beta, 1 beta' and 1 omega subunit. When a sigma factor is associated with the core the holoenzyme is formed, which can initiate transcription.

The catalysed reaction is RNA(n) + a ribonucleoside 5'-triphosphate = RNA(n+1) + diphosphate. Its function is as follows. DNA-dependent RNA polymerase catalyzes the transcription of DNA into RNA using the four ribonucleoside triphosphates as substrates. This Variovorax paradoxus (strain S110) protein is DNA-directed RNA polymerase subunit alpha.